Consider the following 91-residue polypeptide: Small ribosomal subunit protein uS19 (91 aa).

This sequence belongs to the universal ribosomal protein uS19 family.

In terms of biological role, protein S19 forms a complex with S13 that binds strongly to the 16S ribosomal RNA. This chain is Small ribosomal subunit protein uS19, found in Pseudomonas syringae pv. tomato (strain ATCC BAA-871 / DC3000).